The sequence spans 86 residues: Large ribosomal subunit protein uL23 (86 aa).

It belongs to the universal ribosomal protein uL23 family. Part of the 50S ribosomal subunit. Contacts protein L29.

In terms of biological role, binds to 23S rRNA. One of the proteins that surrounds the polypeptide exit tunnel on the outside of the ribosome. The chain is Large ribosomal subunit protein uL23 from Thermococcus sibiricus (strain DSM 12597 / MM 739).